The chain runs to 413 residues: Chloramphenicol efflux pump Rv0191 (413 aa).

12 helical membrane-spanning segments follow: residues 23–43 (LSVL…PVGA), 55–75 (VVLV…TTVP), 89–109 (LVVS…APNF), 110–130 (AVLA…WAVI), 150–170 (IYIG…AMSL), 176–196 (LAAV…RLAL), 226–246 (VLTM…VVII), 256–276 (NLAW…PLVA), 286–306 (AVIV…ALAF), 312–332 (AATA…ATAV), 353–373 (GLYV…GGLL), and 378–398 (LAMM…GMTV).

It belongs to the major facilitator superfamily.

The protein localises to the cell membrane. Its activity is regulated as follows. Inhibited by the drug efflux pump inhibitors verapamil, resperine, piperine, chlorpromazine and carbonyl cyanide m-chlorophenylhydrazone (CCCP). Functionally, active efflux pump that plays an important role in chloramphenicol resistance. Overexpression causes pyrazinamide resistance. This is Chloramphenicol efflux pump Rv0191 from Mycobacterium tuberculosis (strain ATCC 25618 / H37Rv).